A 79-amino-acid chain; its full sequence is Translational regulator CsrA (79 aa).

The protein belongs to the CsrA/RsmA family. In terms of assembly, homodimer; the beta-strands of each monomer intercalate to form a hydrophobic core, while the alpha-helices form wings that extend away from the core.

The protein localises to the cytoplasm. In terms of biological role, a translational regulator that binds mRNA to regulate translation initiation and/or mRNA stability. Usually binds in the 5'-UTR at or near the Shine-Dalgarno sequence preventing ribosome-binding, thus repressing translation. Its main target seems to be the major flagellin gene, while its function is anatagonized by FliW. The protein is Translational regulator CsrA of Leptospira biflexa serovar Patoc (strain Patoc 1 / Ames).